The sequence spans 593 residues: F-box/LRR-repeat protein 17 (593 aa).

Positions 120 to 177 (DLDLQLDTDIVQPGRFHAVGLWEVLKRLPPSSLLMAARVCKGWRETSRKMWKAAEELR) constitute an F-box domain. LRR repeat units lie at residues 178–206 (IRVPERAQIGYIGSLLQKCPRLIRLSLKI), 207–232 (ESDFDATTLACIAFSCPNLEVLEITT), 237–262 (VNRISGDELSRFVANKRGLTSLKMEG), 276–304 (LSTLWLSDLHSLSKMIFNCPNLTEISLEF), 335–361 (SLKLSHTVVLSLTAVNFRYLRMLSLVL), 362–387 (GINITDASVAAISSGYKNLELLDLSG), 414–439 (CPNITSSGIQFATAQLPLLELMDCGM), 477–502 (LSLWGCSSLDALFLNCPELMDLNLNL), and 503–525 (CSNLHPESLVLQCPKLQLVYASG).

Part of a SCF (ASK-cullin-F-box) protein ligase complex. Interacts with SKP1A/ASK1, KRP4, KRP6 and KRP7. In terms of tissue distribution, expressed in developing pollen.

The protein localises to the nucleus. It functions in the pathway protein modification; protein ubiquitination. Functionally, essential protein for male fertility. Component of the SCF(ASK-cullin-F-box) E3 ubiquitin ligase complex SCF(FBL17), which mediates the ubiquitination and subsequent proteasomal degradation of target proteins. Enables the switch in cell cycle control leading to male germ cell lineage formation from microspores after meiosis. Targets CDKA-1 inhibitors the degradation specifically in male germ cells (e.g. KRP6 and KRP7) and thus enables CDKA-1 activation and germ cell S-phase progression. Promotes twin sperm cell production and double fertilization. This Arabidopsis thaliana (Mouse-ear cress) protein is F-box/LRR-repeat protein 17 (FBL17).